The sequence spans 21 residues: Dahlein-5.2 (21 aa).

In terms of tissue distribution, expressed by the skin dorsal glands.

It localises to the secreted. Has no antimicrobial activity. Strongly inhibits the formation of NO by neuronal nitric oxide synthase at micromolar concentrations. This Ranoidea dahlii (Dahl's aquatic frog) protein is Dahlein-5.2.